Consider the following 391-residue polypeptide: Stearoyl-[acyl-carrier-protein] 9-desaturase 5, chloroplastic (391 aa).

The interval 1 to 20 (MAFAPSHTASPSYCGVAQGG) is disordered. The transit peptide at 1-32 (MAFAPSHTASPSYCGVAQGGRRSNGMSPVVAM) directs the protein to the chloroplast. The Fe cation site is built by glutamate 133, glutamate 171, histidine 174, glutamate 224, glutamate 257, and histidine 260.

This sequence belongs to the fatty acid desaturase type 2 family. As to quaternary structure, homodimer. The cofactor is Fe(2+).

The protein localises to the plastid. It is found in the chloroplast. The catalysed reaction is octadecanoyl-[ACP] + 2 reduced [2Fe-2S]-[ferredoxin] + O2 + 2 H(+) = (9Z)-octadecenoyl-[ACP] + 2 oxidized [2Fe-2S]-[ferredoxin] + 2 H2O. Its pathway is lipid metabolism; fatty acid metabolism. Converts stearoyl-ACP to oleoyl-ACP by introduction of a cis double bond between carbons 9 and 10 of the acyl chain. The chain is Stearoyl-[acyl-carrier-protein] 9-desaturase 5, chloroplastic from Oryza sativa subsp. indica (Rice).